Here is a 158-residue protein sequence, read N- to C-terminus: MALITTGRGMIRDLEKSGSLAVYPPLEGGFEGRYQRRLRASGYVSESITARGLGDLAMYLTGVHGVRPPHLGKKTVGNGPAVGYVYYVPPIVNYKLEHLPPKAKGLVLWIMEGQILSSQEIEYLTVLPKSEPRVKVIVEMGGDRFFRWTPLQNTLVPA.

Belongs to the complex I NdhN subunit family. NDH-1 can be composed of about 15 different subunits; different subcomplexes with different compositions have been identified which probably have different functions.

It is found in the cellular thylakoid membrane. The enzyme catalyses a plastoquinone + NADH + (n+1) H(+)(in) = a plastoquinol + NAD(+) + n H(+)(out). It carries out the reaction a plastoquinone + NADPH + (n+1) H(+)(in) = a plastoquinol + NADP(+) + n H(+)(out). In terms of biological role, NDH-1 shuttles electrons from an unknown electron donor, via FMN and iron-sulfur (Fe-S) centers, to quinones in the respiratory and/or the photosynthetic chain. The immediate electron acceptor for the enzyme in this species is believed to be plastoquinone. Couples the redox reaction to proton translocation, and thus conserves the redox energy in a proton gradient. Cyanobacterial NDH-1 also plays a role in inorganic carbon-concentration. The chain is NAD(P)H-quinone oxidoreductase subunit N from Trichodesmium erythraeum (strain IMS101).